The chain runs to 110 residues: Co-chaperonin GroES (110 aa).

This sequence belongs to the GroES chaperonin family. In terms of assembly, heptamer of 7 subunits arranged in a ring. Interacts with the chaperonin GroEL.

The protein resides in the cytoplasm. Functionally, together with the chaperonin GroEL, plays an essential role in assisting protein folding. The GroEL-GroES system forms a nano-cage that allows encapsulation of the non-native substrate proteins and provides a physical environment optimized to promote and accelerate protein folding. GroES binds to the apical surface of the GroEL ring, thereby capping the opening of the GroEL channel. This chain is Co-chaperonin GroES, found in Mycoplasma genitalium (strain ATCC 33530 / DSM 19775 / NCTC 10195 / G37) (Mycoplasmoides genitalium).